The chain runs to 580 residues: Arginine--tRNA ligase (580 aa).

Positions Ala131–His141 match the 'HIGH' region motif.

The protein belongs to the class-I aminoacyl-tRNA synthetase family. Monomer.

It is found in the cytoplasm. The enzyme catalyses tRNA(Arg) + L-arginine + ATP = L-arginyl-tRNA(Arg) + AMP + diphosphate. This chain is Arginine--tRNA ligase, found in Cereibacter sphaeroides (strain ATCC 17025 / ATH 2.4.3) (Rhodobacter sphaeroides).